The sequence spans 140 residues: Large ribosomal subunit protein uL14 (140 aa).

The residue at position 17 (Ser-17) is a Phosphoserine. At Tyr-38 the chain carries Phosphotyrosine.

This sequence belongs to the universal ribosomal protein uL14 family. As to quaternary structure, component of the large ribosomal subunit.

The protein resides in the cytoplasm. In terms of biological role, component of the large ribosomal subunit. The ribosome is a large ribonucleoprotein complex responsible for the synthesis of proteins in the cell. The sequence is that of Large ribosomal subunit protein uL14 (RPL23) from Canis lupus familiaris (Dog).